A 177-amino-acid chain; its full sequence is Transcriptional repressor NrdR (177 aa).

The segment at 3-34 is a zinc-finger region; the sequence is CPYCGGSETQVKDSRPSEDGAAIRRRRVCPDC. Residues 49 to 139 enclose the ATP-cone domain; sequence VVVLKRSGKR…VYKNFREARD (91 aa). The tract at residues 148–177 is disordered; that stretch reads SDGMPVPAAAPEAEGDPEPEASGRRRAGRP.

This sequence belongs to the NrdR family. Zn(2+) is required as a cofactor.

Negatively regulates transcription of bacterial ribonucleotide reductase nrd genes and operons by binding to NrdR-boxes. The polypeptide is Transcriptional repressor NrdR (Methylobacterium radiotolerans (strain ATCC 27329 / DSM 1819 / JCM 2831 / NBRC 15690 / NCIMB 10815 / 0-1)).